Reading from the N-terminus, the 325-residue chain is Phospholipid phosphatase-related protein type 1 (325 aa).

3 helical membrane-spanning segments follow: residues 11–31 (YSII…TVLL), 67–87 (FISP…IIFI), and 127–147 (FIGV…AGQV). Asparagine 163 carries an N-linked (GlcNAc...) asparagine glycan. Helical transmembrane passes span 201-218 (AALS…ITST), 230-247 (VLCL…LNRV), and 257-277 (VIGG…CVVH). Asparagine 316 is a glycosylation site (N-linked (GlcNAc...) asparagine).

It belongs to the PA-phosphatase related phosphoesterase family.

The protein localises to the cell membrane. It localises to the cell projection. It is found in the neuron projection. In terms of biological role, may play a role in neurite outgrowth and neurogenesis. The polypeptide is Phospholipid phosphatase-related protein type 1 (Xenopus tropicalis (Western clawed frog)).